Here is a 287-residue protein sequence, read N- to C-terminus: Ferredoxin-type protein NapH (287 aa).

The Cytoplasmic portion of the chain corresponds to 1–29 (MANRKRDAGREALEKKGWWRSHRWLVLRR). Residues 30–50 (LCQFFVLGMFLSGPWFGVWIL) form a helical membrane-spanning segment. Over 51-79 (HGNYSSSLLFDTVPLTDPLMTLQSLASGH) the chain is Periplasmic. A helical membrane pass occupies residues 80-100 (LPATVALTGAVIITVLYALAG). The Cytoplasmic portion of the chain corresponds to 101–139 (KRLFCSWVCPLNPITDLANWLRRRFDLNQSATIPRHIRY). A helical transmembrane segment spans residues 140–160 (VLLVVILVGSALTGTLIWEWI). Topologically, residues 161–170 (NPVSLMGRSL) are periplasmic. Residues 171 to 191 (VMGFGSGALLILALFLFDLLV) traverse the membrane as a helical segment. The Cytoplasmic portion of the chain corresponds to 192-287 (VEHGWCGHIC…TTRWSSGAKS (96 aa)). 2 4Fe-4S ferredoxin-type domains span residues 217-247 (TVAA…APVL) and 251-280 (SPVQ…ITTR). Positions 226, 229, 232, 236, 260, 263, 266, and 270 each coordinate [4Fe-4S] cluster.

As to quaternary structure, interacts with NapC. Requires [4Fe-4S] cluster as cofactor.

The protein localises to the cell inner membrane. Required for electron transfer from ubiquinol, via NapC, to the periplasmic nitrate reductase NapAB complex. This is Ferredoxin-type protein NapH (napH) from Escherichia coli (strain K12).